The sequence spans 206 residues: Small ribosomal subunit protein uS4 (206 aa).

The region spanning 96 to 157 is the S4 RNA-binding domain; the sequence is CRLDNVVYRM…KCRNQLRIAQ (62 aa).

The protein belongs to the universal ribosomal protein uS4 family. Part of the 30S ribosomal subunit. Contacts protein S5. The interaction surface between S4 and S5 is involved in control of translational fidelity.

Its function is as follows. One of the primary rRNA binding proteins, it binds directly to 16S rRNA where it nucleates assembly of the body of the 30S subunit. With S5 and S12 plays an important role in translational accuracy. The sequence is that of Small ribosomal subunit protein uS4 from Stutzerimonas stutzeri (strain A1501) (Pseudomonas stutzeri).